The sequence spans 321 residues: MMMMMSRSGANRVANTAMFVAKGLSGEVGGLRALYGGGVRSESTLALSEKEKIEKKVGLSSAGGNKEEKVIVSYWGIQPSKITKKDGTEWKWNCFSPWGTYKADLSIDLEKHMPPTTFLDKMAFWTVKVLRYPTDVFFQRRYGCRAMMLETVAAVPGMVAGMLLHCKSLRRFEHSGGWFKALLEEAENERMHLMTFMEVAKPKWYERALVITVQGVFFNAYFLGYLLSPKFAHRMFGYLEEEAIHSYTEFLKELDKGNIENVPAPAIAIDYWQLPPGSTLRDVVMVVRADEAHHRDVNHFASDIHYQGRELREAAAPIGYH.

The N-terminal 41 residues, 1–41 (MMMMMSRSGANRVANTAMFVAKGLSGEVGGLRALYGGGVRS), are a transit peptide targeting the mitochondrion. The helical transmembrane segment at 146–166 (AMMLETVAAVPGMVAGMLLHC) threads the bilayer. Fe cation-binding residues include glutamate 150, glutamate 189, and histidine 192. Residues 208 to 228 (ALVITVQGVFFNAYFLGYLLS) form a helical membrane-spanning segment. The Fe cation site is built by glutamate 240, glutamate 291, and histidine 294.

Belongs to the alternative oxidase family. As to quaternary structure, homodimer; disulfide-linked. The cofactor is Fe cation.

It localises to the mitochondrion inner membrane. The enzyme catalyses 2 a ubiquinol + O2 = 2 a ubiquinone + 2 H2O. Its activity is regulated as follows. When the two monomeric subunits are covalently linked by a S-S bond, the enzyme is essentially inactive. When the disulfide bond is reduced, its component sulfhydryls can associate with K-keto acids through formation of a thiohemiacetal, resulting in enzyme activation. Pyruvate increases Vmax, but not the substrate affinity. Functionally, catalyzes the cyanide-resistant oxidation of ubiquinol and the reduction of molecular oxygen to water, but does not translocate protons and consequently is not linked to oxidative phosphorylation. May increase respiration when the cytochrome respiratory pathway is restricted, or in response to low temperatures. This is Ubiquinol oxidase 1, mitochondrial (AOX1) from Glycine max (Soybean).